Reading from the N-terminus, the 85-residue chain is Small ribosomal subunit protein bS16 (85 aa).

This sequence belongs to the bacterial ribosomal protein bS16 family.

The chain is Small ribosomal subunit protein bS16 from Pseudomonas savastanoi pv. phaseolicola (strain 1448A / Race 6) (Pseudomonas syringae pv. phaseolicola (strain 1448A / Race 6)).